Here is a 140-residue protein sequence, read N- to C-terminus: MPADRCKGWLGLGAVQASPINWIGRYSFGTPEEEVSLSNDAEPEGIGAIDQLYDILEMLEEDIKDLEGARRERVNVFLYQGIFEAISFLDELGMAGRIGLSAMELDKFQRMSGTIDNAVLRQMTGRLKSLLREANCLYDR.

This is an uncharacterized protein from Sinorhizobium fredii (strain NBRC 101917 / NGR234).